A 341-amino-acid polypeptide reads, in one-letter code: Methionine import ATP-binding protein MetN (341 aa).

An ABC transporter domain is found at 9 to 247 (ISVEQLNKEI…PQSAITEELF (239 aa)). 41–48 (GHSGSGKS) lines the ATP pocket.

The protein belongs to the ABC transporter superfamily. Methionine importer (TC 3.A.1.24) family. In terms of assembly, the complex is composed of two ATP-binding proteins (MetN), two transmembrane proteins (MetI) and a solute-binding protein (MetQ).

It is found in the cell inner membrane. The enzyme catalyses L-methionine(out) + ATP + H2O = L-methionine(in) + ADP + phosphate + H(+). It catalyses the reaction D-methionine(out) + ATP + H2O = D-methionine(in) + ADP + phosphate + H(+). Its function is as follows. Part of the ABC transporter complex MetNIQ involved in methionine import. Responsible for energy coupling to the transport system. The chain is Methionine import ATP-binding protein MetN from Chlamydia abortus (strain DSM 27085 / S26/3) (Chlamydophila abortus).